Consider the following 147-residue polypeptide: Hemoglobin subunit beta (147 aa).

Residues 3–147 (EWTDKERSII…VVSALGKQYH (145 aa)) enclose the Globin domain. His64 and His93 together coordinate heme b.

It belongs to the globin family. In terms of assembly, hb1 is a heterotetramer of two alpha chains and two beta chains. In terms of tissue distribution, red blood cells.

In terms of biological role, involved in oxygen transport from gills to the various peripheral tissues. The chain is Hemoglobin subunit beta (hbb) from Trematomus bernacchii (Emerald rockcod).